A 296-amino-acid chain; its full sequence is Cytidine deaminase (296 aa).

CMP/dCMP-type deaminase domains are found at residues 47-167 and 186-296; these read EESE…FGPS and DSSD…IDPA. 88–90 is a substrate binding site; it reads NLE. His-101 contributes to the Zn(2+) binding site. Glu-103 (proton donor) is an active-site residue. Cys-128 and Cys-131 together coordinate Zn(2+).

It belongs to the cytidine and deoxycytidylate deaminase family. In terms of assembly, homodimer. Requires Zn(2+) as cofactor.

It carries out the reaction cytidine + H2O + H(+) = uridine + NH4(+). The enzyme catalyses 2'-deoxycytidine + H2O + H(+) = 2'-deoxyuridine + NH4(+). Functionally, this enzyme scavenges exogenous and endogenous cytidine and 2'-deoxycytidine for UMP synthesis. The polypeptide is Cytidine deaminase (Shewanella woodyi (strain ATCC 51908 / MS32)).